The chain runs to 281 residues: Foldase protein PrsA (281 aa).

An N-terminal signal peptide occupies residues 1–18 (MKKWMMAAAVVSLMALSA). Cysteine 19 is lipidated: N-palmitoyl cysteine. A lipid anchor (S-diacylglycerol cysteine) is attached at cysteine 19. Residues 133–223 (KPKIRASHIL…YGYHIIKVTD (91 aa)) form the PpiC domain.

Belongs to the PrsA family.

The protein localises to the cell membrane. The catalysed reaction is [protein]-peptidylproline (omega=180) = [protein]-peptidylproline (omega=0). Plays a major role in protein secretion by helping the post-translocational extracellular folding of several secreted proteins. This chain is Foldase protein PrsA, found in Geobacillus kaustophilus (strain HTA426).